Consider the following 281-residue polypeptide: sn-glycerol-3-phosphate transport system permease protein UgpE (281 aa).

The next 6 helical transmembrane spans lie at 16–36 (LILG…AATL), 85–105 (FSIT…IVWF), 113–133 (FFWM…FPTV), 142–162 (LDSY…TFLF), 202–222 (ALFV…LLII), and 247–267 (WNSV…IVLV). Positions 77–268 (LLNSFVMAFS…IPPVVIVLVM (192 aa)) constitute an ABC transmembrane type-1 domain.

This sequence belongs to the binding-protein-dependent transport system permease family. UgpAE subfamily. In terms of assembly, the complex is composed of two ATP-binding proteins (UgpC), two transmembrane proteins (UgpA and UgpE) and a solute-binding protein (UgpB).

The protein resides in the cell inner membrane. Part of the ABC transporter complex UgpBAEC involved in sn-glycerol-3-phosphate (G3P) import. Probably responsible for the translocation of the substrate across the membrane. The protein is sn-glycerol-3-phosphate transport system permease protein UgpE (ugpE) of Escherichia coli O6:K15:H31 (strain 536 / UPEC).